The primary structure comprises 398 residues: Phosphoglycerate kinase (398 aa).

Substrate is bound by residues 23-25, R38, 61-64, R120, and R153; these read DLN and HFGR. Residues K203, E325, and 355–358 each bind ATP; that span reads GGDT.

It belongs to the phosphoglycerate kinase family. As to quaternary structure, monomer.

The protein resides in the cytoplasm. It catalyses the reaction (2R)-3-phosphoglycerate + ATP = (2R)-3-phospho-glyceroyl phosphate + ADP. It participates in carbohydrate degradation; glycolysis; pyruvate from D-glyceraldehyde 3-phosphate: step 2/5. In Sphingopyxis alaskensis (strain DSM 13593 / LMG 18877 / RB2256) (Sphingomonas alaskensis), this protein is Phosphoglycerate kinase.